Here is a 221-residue protein sequence, read N- to C-terminus: Glutathione peroxidase 6 (221 aa).

Positions 1 to 19 (MTQQFWGPCLFSLFMAVLA) are cleaved as a signal peptide. Cys73 is a catalytic residue.

Belongs to the glutathione peroxidase family. In terms of tissue distribution, expressed in the Bowman glands.

It is found in the secreted. The enzyme catalyses 2 glutathione + H2O2 = glutathione disulfide + 2 H2O. The chain is Glutathione peroxidase 6 (Gpx6) from Rattus norvegicus (Rat).